Reading from the N-terminus, the 129-residue chain is Phosphoribosyl-AMP cyclohydrolase (129 aa).

Aspartate 79 provides a ligand contact to Mg(2+). Residue cysteine 80 participates in Zn(2+) binding. Mg(2+) is bound by residues aspartate 81 and aspartate 83. Positions 96 and 103 each coordinate Zn(2+).

This sequence belongs to the PRA-CH family. As to quaternary structure, homodimer. The cofactor is Mg(2+). It depends on Zn(2+) as a cofactor.

It localises to the cytoplasm. The catalysed reaction is 1-(5-phospho-beta-D-ribosyl)-5'-AMP + H2O = 1-(5-phospho-beta-D-ribosyl)-5-[(5-phospho-beta-D-ribosylamino)methylideneamino]imidazole-4-carboxamide. It functions in the pathway amino-acid biosynthesis; L-histidine biosynthesis; L-histidine from 5-phospho-alpha-D-ribose 1-diphosphate: step 3/9. Catalyzes the hydrolysis of the adenine ring of phosphoribosyl-AMP. The protein is Phosphoribosyl-AMP cyclohydrolase of Magnetococcus marinus (strain ATCC BAA-1437 / JCM 17883 / MC-1).